Here is a 421-residue protein sequence, read N- to C-terminus: Serine hydroxymethyltransferase (421 aa).

Residues Leu-121 and 125 to 127 (GHL) each bind (6S)-5,6,7,8-tetrahydrofolate. N6-(pyridoxal phosphate)lysine is present on Lys-229.

Belongs to the SHMT family. Homodimer. It depends on pyridoxal 5'-phosphate as a cofactor.

Its subcellular location is the cytoplasm. It catalyses the reaction (6R)-5,10-methylene-5,6,7,8-tetrahydrofolate + glycine + H2O = (6S)-5,6,7,8-tetrahydrofolate + L-serine. Its pathway is one-carbon metabolism; tetrahydrofolate interconversion. The protein operates within amino-acid biosynthesis; glycine biosynthesis; glycine from L-serine: step 1/1. Its function is as follows. Catalyzes the reversible interconversion of serine and glycine with tetrahydrofolate (THF) serving as the one-carbon carrier. This reaction serves as the major source of one-carbon groups required for the biosynthesis of purines, thymidylate, methionine, and other important biomolecules. Also exhibits THF-independent aldolase activity toward beta-hydroxyamino acids, producing glycine and aldehydes, via a retro-aldol mechanism. This Haemophilus influenzae (strain ATCC 51907 / DSM 11121 / KW20 / Rd) protein is Serine hydroxymethyltransferase.